Reading from the N-terminus, the 451-residue chain is Chromosomal replication initiator protein DnaA (451 aa).

The segment at 1 to 77 (MTENEQIFWN…EVYNAQISVD (77 aa)) is domain I, interacts with DnaA modulators. A domain II region spans residues 77 to 110 (DYVFEEDLMIEQNQTKINQKPKQQALNSLPTVTS). The interval 111–329 (DLNSKYSFEN…GALKDISLGA (219 aa)) is domain III, AAA+ region. The ATP site is built by Gly-155, Gly-157, Lys-158, and Thr-159. Positions 330-451 (NFKQIDTITV…EIETIKNKIK (122 aa)) are domain IV, binds dsDNA.

Belongs to the DnaA family. Oligomerizes as a right-handed, spiral filament on DNA at oriC.

The protein resides in the cytoplasm. In terms of biological role, plays an essential role in the initiation and regulation of chromosomal replication. ATP-DnaA binds to the origin of replication (oriC) to initiate formation of the DNA replication initiation complex once per cell cycle. Binds the DnaA box (a 9 base pair repeat at the origin) and separates the double-stranded (ds)DNA. Forms a right-handed helical filament on oriC DNA; dsDNA binds to the exterior of the filament while single-stranded (ss)DNA is stabiized in the filament's interior. The ATP-DnaA-oriC complex binds and stabilizes one strand of the AT-rich DNA unwinding element (DUE), permitting loading of DNA polymerase. After initiation quickly degrades to an ADP-DnaA complex that is not apt for DNA replication. Binds acidic phospholipids. The polypeptide is Chromosomal replication initiator protein DnaA (Streptococcus pyogenes serotype M49 (strain NZ131)).